We begin with the raw amino-acid sequence, 505 residues long: MFS efflux pump atnC (505 aa).

12 helical membrane-spanning segments follow: residues V48 to V68, L117 to G137, V148 to W168, L181 to A201, L216 to A236, W240 to L260, V304 to L324, L343 to F363, L377 to T399, A403 to W425, T439 to Y459, and W469 to L489.

Belongs to the major facilitator superfamily.

Its subcellular location is the membrane. The protein operates within secondary metabolite biosynthesis. In terms of biological role, MFS efflux pump; part of the gene cluster that mediates the biosynthesis of aspercryptins, linear lipopeptides built from six amino acids including 2 highly unusual and nonproteogenic amino acids, 2-amino-octanoic acid (2aoa) and 2-amino-dodecanol (2adol). The polypeptide is MFS efflux pump atnC (Emericella nidulans (strain FGSC A4 / ATCC 38163 / CBS 112.46 / NRRL 194 / M139) (Aspergillus nidulans)).